Reading from the N-terminus, the 648-residue chain is Primary amine oxidase (648 aa).

A propeptide spanning residues 1–9 is cleaved from the precursor; it reads MTLNAESEA. 299–310 contributes to the substrate binding site; it reads AFDSGEYNIGNM. Aspartate 301 acts as the Proton acceptor in catalysis. Cysteines 320 and 346 form a disulfide. Residue 382 to 387 participates in substrate binding; the sequence is VANYEY. Tyrosine 385 (schiff-base intermediate with substrate; via topaquinone) is an active-site residue. The residue at position 385 (tyrosine 385) is a 2',4',5'-topaquinone. 2 residues coordinate Cu cation: histidine 436 and histidine 438. Mn(2+)-binding residues include aspartate 445, phenylalanine 446, and aspartate 584. Histidine 595 contributes to the Cu cation binding site.

Belongs to the copper/topaquinone oxidase family. In terms of assembly, homodimer. Cu cation is required as a cofactor. Zn(2+) serves as cofactor. The cofactor is L-topaquinone. Requires Mn(2+) as cofactor. Post-translationally, topaquinone (TPQ) is generated by copper-dependent autoxidation of a specific tyrosyl residue.

It carries out the reaction a primary methyl amine + O2 + H2O = an aldehyde + H2O2 + NH4(+). Functionally, the exact function of MaoXI is not known. The sequence is that of Primary amine oxidase (maoI) from Arthrobacter sp. (strain P1).